Consider the following 136-residue polypeptide: ATP synthase epsilon chain (136 aa).

It belongs to the ATPase epsilon chain family. As to quaternary structure, F-type ATPases have 2 components, CF(1) - the catalytic core - and CF(0) - the membrane proton channel. CF(1) has five subunits: alpha(3), beta(3), gamma(1), delta(1), epsilon(1). CF(0) has three main subunits: a, b and c.

It is found in the cell membrane. Produces ATP from ADP in the presence of a proton gradient across the membrane. The sequence is that of ATP synthase epsilon chain from Herpetosiphon aurantiacus (strain ATCC 23779 / DSM 785 / 114-95).